We begin with the raw amino-acid sequence, 133 residues long: NADPH-dependent 7-cyano-7-deazaguanine reductase (133 aa).

Cysteine 48 serves as the catalytic Thioimide intermediate. The active-site Proton donor is the aspartate 55. Residues 70 to 72 and 89 to 90 each bind substrate; these read VEL and QE.

It belongs to the GTP cyclohydrolase I family. QueF type 1 subfamily.

It localises to the cytoplasm. The catalysed reaction is 7-aminomethyl-7-carbaguanine + 2 NADP(+) = 7-cyano-7-deazaguanine + 2 NADPH + 3 H(+). It participates in tRNA modification; tRNA-queuosine biosynthesis. Catalyzes the NADPH-dependent reduction of 7-cyano-7-deazaguanine (preQ0) to 7-aminomethyl-7-deazaguanine (preQ1). The sequence is that of NADPH-dependent 7-cyano-7-deazaguanine reductase from Thermoanaerobacter pseudethanolicus (strain ATCC 33223 / 39E) (Clostridium thermohydrosulfuricum).